The chain runs to 480 residues: 2-phosphoxylose phosphatase 1 (480 aa).

The Cytoplasmic portion of the chain corresponds to 1–6 (MLFRNR). The helical; Signal-anchor for type II membrane protein transmembrane segment at 7 to 27 (FLLLLALAALLAFVSLSLQFF) threads the bilayer. Residues 28-480 (HLIPVSTPKN…YYDACHREGF (453 aa)) are Lumenal-facing. Catalysis depends on His97, which acts as the Nucleophile. N-linked (GlcNAc...) asparagine glycans are attached at residues Asn305 and Asn354. The active-site Proton donor is the Asp379.

The protein belongs to the histidine acid phosphatase family. In terms of assembly, interacts with B3GAT3; the interaction increases the 2-phosphoxylose phosphatase activity of PXYLP1 during completion of linkage region formation in a B3GAT3-mediated manner. In terms of tissue distribution, widely expressed. Strongly expressed in spleen, fetal liver, moderately in placenta, pancreas, kidney, thymus and colon.

The protein localises to the golgi apparatus membrane. It catalyses the reaction 3-O-[beta-D-GlcA-(1-&gt;3)-beta-D-Gal-(1-&gt;3)-beta-D-Gal-(1-&gt;4)-beta-D-2-O-P-Xyl]-L-seryl-[protein] + H2O = 3-O-(beta-D-GlcA-(1-&gt;3)-beta-D-Gal-(1-&gt;3)-beta-D-Gal-(1-&gt;4)-beta-D-Xyl)-L-seryl-[protein] + phosphate. Functionally, responsible for the 2-O-dephosphorylation of xylose in the glycosaminoglycan-protein linkage region of proteoglycans thereby regulating the amount of mature glycosaminoglycan (GAG) chains. Sulfated glycosaminoglycans (GAGs), including heparan sulfate and chondroitin sulfate, are synthesized on the so-called common GAG-protein linkage region (GlcUAbeta1-3Galbeta1-3Galbeta1-4Xylbeta1-O-Ser) of core proteins, which is formed by the stepwise addition of monosaccharide residues by the respective specific glycosyltransferases. Xylose 2-O-dephosphorylation during completion of linkage region formation is a prerequisite for the initiation and efficient elongation of the repeating disaccharide region of GAG chains. In Homo sapiens (Human), this protein is 2-phosphoxylose phosphatase 1.